The primary structure comprises 375 residues: Trichodiene synthase (375 aa).

Belongs to the trichodiene synthase family.

It carries out the reaction (2E,6E)-farnesyl diphosphate = trichodiene + diphosphate. It participates in sesquiterpene biosynthesis; trichothecene biosynthesis. In terms of biological role, TS is a member of the terpene cyclase group of enzymes. It catalyzes the isomerization and cyclization of farnesyl pyro-phosphate to form trichodiene, the first cyclic intermediate in the biosynthetic pathway for trichothecenes. It serves to branch trichothecene biosynthesis from the isoprenoid pathway. This chain is Trichodiene synthase (TRI5), found in Fusarium pseudograminearum (Wheat and barley crown-rot fungus).